The chain runs to 342 residues: S-adenosylmethionine:tRNA ribosyltransferase-isomerase (342 aa).

This sequence belongs to the QueA family. In terms of assembly, monomer.

It localises to the cytoplasm. It carries out the reaction 7-aminomethyl-7-carbaguanosine(34) in tRNA + S-adenosyl-L-methionine = epoxyqueuosine(34) in tRNA + adenine + L-methionine + 2 H(+). Its pathway is tRNA modification; tRNA-queuosine biosynthesis. In terms of biological role, transfers and isomerizes the ribose moiety from AdoMet to the 7-aminomethyl group of 7-deazaguanine (preQ1-tRNA) to give epoxyqueuosine (oQ-tRNA). The protein is S-adenosylmethionine:tRNA ribosyltransferase-isomerase of Streptococcus pyogenes serotype M12 (strain MGAS2096).